The sequence spans 262 residues: Acyl-[acyl-carrier-protein]--UDP-N-acetylglucosamine O-acyltransferase (262 aa).

The protein belongs to the transferase hexapeptide repeat family. LpxA subfamily. In terms of assembly, homotrimer.

Its subcellular location is the cytoplasm. It catalyses the reaction a (3R)-hydroxyacyl-[ACP] + UDP-N-acetyl-alpha-D-glucosamine = a UDP-3-O-[(3R)-3-hydroxyacyl]-N-acetyl-alpha-D-glucosamine + holo-[ACP]. It participates in glycolipid biosynthesis; lipid IV(A) biosynthesis; lipid IV(A) from (3R)-3-hydroxytetradecanoyl-[acyl-carrier-protein] and UDP-N-acetyl-alpha-D-glucosamine: step 1/6. Involved in the biosynthesis of lipid A, a phosphorylated glycolipid that anchors the lipopolysaccharide to the outer membrane of the cell. This Burkholderia multivorans (strain ATCC 17616 / 249) protein is Acyl-[acyl-carrier-protein]--UDP-N-acetylglucosamine O-acyltransferase.